The following is a 134-amino-acid chain: Phosphoribosyl-AMP cyclohydrolase (134 aa).

Position 77 (aspartate 77) interacts with Mg(2+). Position 78 (cysteine 78) interacts with Zn(2+). Mg(2+) is bound by residues aspartate 79 and aspartate 81. Residues cysteine 95 and cysteine 102 each coordinate Zn(2+).

The protein belongs to the PRA-CH family. Homodimer. It depends on Mg(2+) as a cofactor. Requires Zn(2+) as cofactor.

The protein localises to the cytoplasm. It carries out the reaction 1-(5-phospho-beta-D-ribosyl)-5'-AMP + H2O = 1-(5-phospho-beta-D-ribosyl)-5-[(5-phospho-beta-D-ribosylamino)methylideneamino]imidazole-4-carboxamide. Its pathway is amino-acid biosynthesis; L-histidine biosynthesis; L-histidine from 5-phospho-alpha-D-ribose 1-diphosphate: step 3/9. Functionally, catalyzes the hydrolysis of the adenine ring of phosphoribosyl-AMP. The polypeptide is Phosphoribosyl-AMP cyclohydrolase (Pseudomonas aeruginosa (strain LESB58)).